A 593-amino-acid polypeptide reads, in one-letter code: ETS-related transcription factor Elf-2 (593 aa).

S107 carries the post-translational modification Phosphoserine. Positions 146–201 are disordered; the sequence is VEVSTEESEPMDTSPIPTSPDSHEPMKKKKVGRKPKTQQSPISNGSPELGIKKKPR. A compositionally biased stretch (basic residues) spans 171–181; the sequence is MKKKKVGRKPK. T182 carries the phosphothreonine modification. Over residues 182–191 the composition is skewed to polar residues; that stretch reads TQQSPISNGS. Residues S185 and S191 each carry the phosphoserine modification. The ETS DNA-binding region spans 208–290; it reads TYLWEFLLDL…EGQRLVYQFK (83 aa). Residues S363 and S372 each carry the phosphoserine modification. T376 bears the Phosphothreonine mark. Phosphoserine is present on S430. At R494 the chain carries Omega-N-methylarginine. At T521 the chain carries Phosphothreonine. K536 participates in a covalent cross-link: Glycyl lysine isopeptide (Lys-Gly) (interchain with G-Cter in SUMO2).

The protein belongs to the ETS family. Interacts with the LIM domains of LMO2. Interacts via its N-terminal region with RUNX1. As to expression, expressed in all fetal and adult tissues examined. Among fetal tissues, highest levels of expression detected in heart, lung, liver and kidney, and lower levels in brain. Among adult tissues, highest levels of expression detected in heart, placenta, lung, skeletal muscle, spleen, thymus, testis and ovary. Moderate expression in prostate, small intestine, kidney, liver and pancreas, and weak expression in colon, brain and peripheral blood lymphocytes.

The protein resides in the nucleus. Functionally, isoform 1 transcriptionally activates the LYN and BLK promoters and acts synergistically with RUNX1 to transactivate the BLK promoter. In terms of biological role, isoform 2 may function in repression of RUNX1-mediated transactivation. The polypeptide is ETS-related transcription factor Elf-2 (Homo sapiens (Human)).